The chain runs to 317 residues: Small ribosomal subunit protein uS2 (317 aa).

2 disordered regions span residues 1 to 30 (MENE…ASKE) and 293 to 317 (RSFE…EVAE). Over residues 18 to 30 (MAEKADDSKASKE) the composition is skewed to basic and acidic residues. Residues 308 to 317 (KTTTSTEVAE) show a composition bias toward low complexity.

It belongs to the universal ribosomal protein uS2 family.

The polypeptide is Small ribosomal subunit protein uS2 (Mycoplasmopsis agalactiae (strain NCTC 10123 / CIP 59.7 / PG2) (Mycoplasma agalactiae)).